The sequence spans 239 residues: Small ribosomal subunit protein uS2 (239 aa).

It belongs to the universal ribosomal protein uS2 family.

In Francisella tularensis subsp. holarctica (strain FTNF002-00 / FTA), this protein is Small ribosomal subunit protein uS2.